We begin with the raw amino-acid sequence, 1255 residues long: DNA-directed RNA polymerase subunit beta' (1255 aa).

4 residues coordinate Zn(2+): Cys68, Cys70, Cys83, and Cys86. 3 residues coordinate Mg(2+): Asp457, Asp459, and Asp461. The Zn(2+) site is built by Cys803, Cys885, Cys892, and Cys895. Over residues 1220–1240 (NSDEEVSFTEDEYFEDEENDL) the composition is skewed to acidic residues. Residues 1220–1255 (NSDEEVSFTEDEYFEDEENDLSTENFDDLKFSEEEE) are disordered. Residues 1246–1255 (DDLKFSEEEE) show a composition bias toward basic and acidic residues.

The protein belongs to the RNA polymerase beta' chain family. The RNAP catalytic core consists of 2 alpha, 1 beta, 1 beta' and 1 omega subunit. When a sigma factor is associated with the core the holoenzyme is formed, which can initiate transcription. The cofactor is Mg(2+). Requires Zn(2+) as cofactor.

The catalysed reaction is RNA(n) + a ribonucleoside 5'-triphosphate = RNA(n+1) + diphosphate. In terms of biological role, DNA-dependent RNA polymerase catalyzes the transcription of DNA into RNA using the four ribonucleoside triphosphates as substrates. The polypeptide is DNA-directed RNA polymerase subunit beta' (Lachnoclostridium phytofermentans (strain ATCC 700394 / DSM 18823 / ISDg) (Clostridium phytofermentans)).